Here is a 248-residue protein sequence, read N- to C-terminus: Glutathione S-transferase omega-2 (248 aa).

The 80-residue stretch at 22 to 101 folds into the GST N-terminal domain; sequence GVIRIYSMRF…YLDDVYPGRK (80 aa). Cys32 (nucleophile) is an active-site residue. Residues Lys59, Ile72, and 85-86 each bind glutathione; that span reads ES. The GST C-terminal domain occupies 106-231; sequence DPYERARQKM…VFLGFLNLYF (126 aa).

This sequence belongs to the GST superfamily. Omega family.

The enzyme catalyses RX + glutathione = an S-substituted glutathione + a halide anion + H(+). It catalyses the reaction L-dehydroascorbate + 2 glutathione = glutathione disulfide + L-ascorbate. It carries out the reaction methylarsonate + 2 glutathione + H(+) = methylarsonous acid + glutathione disulfide + H2O. Functionally, exhibits glutathione-dependent thiol transferase activity. Has high dehydroascorbate reductase activity and may contribute to the recycling of ascorbic acid. Participates in the biotransformation of inorganic arsenic and reduces monomethylarsonic acid (MMA). This is Glutathione S-transferase omega-2 (Gsto2) from Mus musculus (Mouse).